The following is a 320-amino-acid chain: Aspartate carbamoyltransferase catalytic subunit (320 aa).

Carbamoyl phosphate contacts are provided by R58 and T59. K86 serves as a coordination point for L-aspartate. Residues R108, H136, and Q139 each coordinate carbamoyl phosphate. L-aspartate-binding residues include R169 and R223. Carbamoyl phosphate contacts are provided by G264 and P265.

Belongs to the aspartate/ornithine carbamoyltransferase superfamily. ATCase family. As to quaternary structure, heterododecamer (2C3:3R2) of six catalytic PyrB chains organized as two trimers (C3), and six regulatory PyrI chains organized as three dimers (R2).

It carries out the reaction carbamoyl phosphate + L-aspartate = N-carbamoyl-L-aspartate + phosphate + H(+). It participates in pyrimidine metabolism; UMP biosynthesis via de novo pathway; (S)-dihydroorotate from bicarbonate: step 2/3. Functionally, catalyzes the condensation of carbamoyl phosphate and aspartate to form carbamoyl aspartate and inorganic phosphate, the committed step in the de novo pyrimidine nucleotide biosynthesis pathway. The sequence is that of Aspartate carbamoyltransferase catalytic subunit from Cereibacter sphaeroides (strain ATCC 17025 / ATH 2.4.3) (Rhodobacter sphaeroides).